A 207-amino-acid chain; its full sequence is Guanylate kinase (207 aa).

In terms of domain architecture, Guanylate kinase-like spans 4-184; that stretch reads GTLYIVSAPS…ALADLHTIIR (181 aa). 11–18 is a binding site for ATP; it reads APSGAGKS.

The protein belongs to the guanylate kinase family.

Its subcellular location is the cytoplasm. The catalysed reaction is GMP + ATP = GDP + ADP. Its function is as follows. Essential for recycling GMP and indirectly, cGMP. This is Guanylate kinase from Photorhabdus laumondii subsp. laumondii (strain DSM 15139 / CIP 105565 / TT01) (Photorhabdus luminescens subsp. laumondii).